The primary structure comprises 153 residues: 6,7-dimethyl-8-ribityllumazine synthase (153 aa).

5-amino-6-(D-ribitylamino)uracil is bound by residues Trp22, 56-58, and 80-82; these read SYE and AVI. 85 to 86 provides a ligand contact to (2S)-2-hydroxy-3-oxobutyl phosphate; that stretch reads AT. The Proton donor role is filled by His88. Leu113 is a binding site for 5-amino-6-(D-ribitylamino)uracil. Arg127 contacts (2S)-2-hydroxy-3-oxobutyl phosphate.

It belongs to the DMRL synthase family.

It carries out the reaction (2S)-2-hydroxy-3-oxobutyl phosphate + 5-amino-6-(D-ribitylamino)uracil = 6,7-dimethyl-8-(1-D-ribityl)lumazine + phosphate + 2 H2O + H(+). The protein operates within cofactor biosynthesis; riboflavin biosynthesis; riboflavin from 2-hydroxy-3-oxobutyl phosphate and 5-amino-6-(D-ribitylamino)uracil: step 1/2. In terms of biological role, catalyzes the formation of 6,7-dimethyl-8-ribityllumazine by condensation of 5-amino-6-(D-ribitylamino)uracil with 3,4-dihydroxy-2-butanone 4-phosphate. This is the penultimate step in the biosynthesis of riboflavin. The polypeptide is 6,7-dimethyl-8-ribityllumazine synthase (Herpetosiphon aurantiacus (strain ATCC 23779 / DSM 785 / 114-95)).